The following is a 264-amino-acid chain: Thiazole synthase (264 aa).

The active-site Schiff-base intermediate with DXP is the Lys98. Residues Gly159, 185–186, and 207–208 each bind 1-deoxy-D-xylulose 5-phosphate; these read AG and AT.

The protein belongs to the ThiG family. In terms of assembly, homotetramer. Forms heterodimers with either ThiH or ThiS.

The protein localises to the cytoplasm. The catalysed reaction is [ThiS sulfur-carrier protein]-C-terminal-Gly-aminoethanethioate + 2-iminoacetate + 1-deoxy-D-xylulose 5-phosphate = [ThiS sulfur-carrier protein]-C-terminal Gly-Gly + 2-[(2R,5Z)-2-carboxy-4-methylthiazol-5(2H)-ylidene]ethyl phosphate + 2 H2O + H(+). It participates in cofactor biosynthesis; thiamine diphosphate biosynthesis. Functionally, catalyzes the rearrangement of 1-deoxy-D-xylulose 5-phosphate (DXP) to produce the thiazole phosphate moiety of thiamine. Sulfur is provided by the thiocarboxylate moiety of the carrier protein ThiS. In vitro, sulfur can be provided by H(2)S. This is Thiazole synthase from Mycobacterium ulcerans (strain Agy99).